A 430-amino-acid chain; its full sequence is Adenylosuccinate synthetase (430 aa).

GTP contacts are provided by residues 17–23 (GDEGKGK) and 45–47 (GHT). Asp-18 (proton acceptor) is an active-site residue. 2 residues coordinate Mg(2+): Asp-18 and Gly-45. IMP is bound by residues 18-21 (DEGK), 43-46 (NAGH), Thr-139, Arg-153, Asn-229, Thr-244, and Arg-308. His-46 functions as the Proton donor in the catalytic mechanism. Residue 304–310 (TVTGRRR) coordinates substrate. Residues Arg-310, 336–338 (KLD), and 418–420 (GVG) each bind GTP.

This sequence belongs to the adenylosuccinate synthetase family. In terms of assembly, homodimer. It depends on Mg(2+) as a cofactor.

The protein resides in the cytoplasm. The enzyme catalyses IMP + L-aspartate + GTP = N(6)-(1,2-dicarboxyethyl)-AMP + GDP + phosphate + 2 H(+). The protein operates within purine metabolism; AMP biosynthesis via de novo pathway; AMP from IMP: step 1/2. In terms of biological role, plays an important role in the de novo pathway and in the salvage pathway of purine nucleotide biosynthesis. Catalyzes the first committed step in the biosynthesis of AMP from IMP. The polypeptide is Adenylosuccinate synthetase (Cryptococcus neoformans var. neoformans serotype D (strain B-3501A) (Filobasidiella neoformans)).